The chain runs to 491 residues: Glutamyl-tRNA(Gln) amidotransferase subunit A (491 aa).

Residues K81 and S156 each act as charge relay system in the active site. The Acyl-ester intermediate role is filled by S180.

The protein belongs to the amidase family. GatA subfamily. As to quaternary structure, heterotrimer of A, B and C subunits.

The enzyme catalyses L-glutamyl-tRNA(Gln) + L-glutamine + ATP + H2O = L-glutaminyl-tRNA(Gln) + L-glutamate + ADP + phosphate + H(+). Functionally, allows the formation of correctly charged Gln-tRNA(Gln) through the transamidation of misacylated Glu-tRNA(Gln) in organisms which lack glutaminyl-tRNA synthetase. The reaction takes place in the presence of glutamine and ATP through an activated gamma-phospho-Glu-tRNA(Gln). The sequence is that of Glutamyl-tRNA(Gln) amidotransferase subunit A from Alcanivorax borkumensis (strain ATCC 700651 / DSM 11573 / NCIMB 13689 / SK2).